A 428-amino-acid chain; its full sequence is GTPase Obg (428 aa).

An Obg domain is found at 1 to 158; that stretch reads MFIDQVKIYV…RDVILELKVL (158 aa). Residues 159 to 329 form the OBG-type G domain; sequence ADVGLVGFPS…LLFEVANLIE (171 aa). GTP contacts are provided by residues 165 to 172, 190 to 194, 212 to 215, 282 to 285, and 310 to 312; these read GFPSVGKS, FTTIV, DLPG, NKMD, and SAV. Mg(2+) is bound by residues serine 172 and threonine 192. Residues 350–428 enclose the OCT domain; sequence KFETEGVKFD…ILEYEFEFID (79 aa).

It belongs to the TRAFAC class OBG-HflX-like GTPase superfamily. OBG GTPase family. Monomer. Mg(2+) serves as cofactor.

The protein localises to the cytoplasm. Functionally, an essential GTPase which binds GTP, GDP and possibly (p)ppGpp with moderate affinity, with high nucleotide exchange rates and a fairly low GTP hydrolysis rate. Plays a role in control of the cell cycle, stress response, ribosome biogenesis and in those bacteria that undergo differentiation, in morphogenesis control. In Bacillus anthracis, this protein is GTPase Obg.